The chain runs to 97 residues: Aspartyl/glutamyl-tRNA(Asn/Gln) amidotransferase subunit C (97 aa).

The protein belongs to the GatC family. Heterotrimer of A, B and C subunits.

The catalysed reaction is L-glutamyl-tRNA(Gln) + L-glutamine + ATP + H2O = L-glutaminyl-tRNA(Gln) + L-glutamate + ADP + phosphate + H(+). The enzyme catalyses L-aspartyl-tRNA(Asn) + L-glutamine + ATP + H2O = L-asparaginyl-tRNA(Asn) + L-glutamate + ADP + phosphate + 2 H(+). In terms of biological role, allows the formation of correctly charged Asn-tRNA(Asn) or Gln-tRNA(Gln) through the transamidation of misacylated Asp-tRNA(Asn) or Glu-tRNA(Gln) in organisms which lack either or both of asparaginyl-tRNA or glutaminyl-tRNA synthetases. The reaction takes place in the presence of glutamine and ATP through an activated phospho-Asp-tRNA(Asn) or phospho-Glu-tRNA(Gln). In Clostridium botulinum (strain Eklund 17B / Type B), this protein is Aspartyl/glutamyl-tRNA(Asn/Gln) amidotransferase subunit C.